Consider the following 381-residue polypeptide: Acetylornithine deacetylase (381 aa).

Position 79 (His79) interacts with Zn(2+). Residue Asp81 is part of the active site. Asp111 provides a ligand contact to Zn(2+). Glu143 is an active-site residue. Zn(2+) is bound by residues Glu144, Glu168, and His354.

This sequence belongs to the peptidase M20A family. ArgE subfamily. Homodimer. Zn(2+) serves as cofactor. The cofactor is Co(2+). Requires glutathione as cofactor.

Its subcellular location is the cytoplasm. It carries out the reaction N(2)-acetyl-L-ornithine + H2O = L-ornithine + acetate. It functions in the pathway amino-acid biosynthesis; L-arginine biosynthesis; L-ornithine from N(2)-acetyl-L-ornithine (linear): step 1/1. In terms of biological role, catalyzes the hydrolysis of the amide bond of N(2)-acetylated L-amino acids. Cleaves the acetyl group from N-acetyl-L-ornithine to form L-ornithine, an intermediate in L-arginine biosynthesis pathway, and a branchpoint in the synthesis of polyamines. The polypeptide is Acetylornithine deacetylase (Buchnera aphidicola subsp. Acyrthosiphon pisum (strain 5A)).